The following is a 333-amino-acid chain: 4-hydroxy-3-methylbut-2-enyl diphosphate reductase (333 aa).

Position 20 (C20) interacts with [4Fe-4S] cluster. H49 and H85 together coordinate (2E)-4-hydroxy-3-methylbut-2-enyl diphosphate. Residues H49 and H85 each coordinate dimethylallyl diphosphate. Isopentenyl diphosphate is bound by residues H49 and H85. Residue C107 participates in [4Fe-4S] cluster binding. Residue H135 coordinates (2E)-4-hydroxy-3-methylbut-2-enyl diphosphate. Residue H135 participates in dimethylallyl diphosphate binding. Position 135 (H135) interacts with isopentenyl diphosphate. Residue E137 is the Proton donor of the active site. Position 176 (T176) interacts with (2E)-4-hydroxy-3-methylbut-2-enyl diphosphate. Residue C206 coordinates [4Fe-4S] cluster. (2E)-4-hydroxy-3-methylbut-2-enyl diphosphate-binding residues include S234, S235, N236, and S279. Residues S234, S235, N236, and S279 each contribute to the dimethylallyl diphosphate site. The isopentenyl diphosphate site is built by S234, S235, N236, and S279.

This sequence belongs to the IspH family. [4Fe-4S] cluster serves as cofactor.

It carries out the reaction isopentenyl diphosphate + 2 oxidized [2Fe-2S]-[ferredoxin] + H2O = (2E)-4-hydroxy-3-methylbut-2-enyl diphosphate + 2 reduced [2Fe-2S]-[ferredoxin] + 2 H(+). The catalysed reaction is dimethylallyl diphosphate + 2 oxidized [2Fe-2S]-[ferredoxin] + H2O = (2E)-4-hydroxy-3-methylbut-2-enyl diphosphate + 2 reduced [2Fe-2S]-[ferredoxin] + 2 H(+). It participates in isoprenoid biosynthesis; dimethylallyl diphosphate biosynthesis; dimethylallyl diphosphate from (2E)-4-hydroxy-3-methylbutenyl diphosphate: step 1/1. It functions in the pathway isoprenoid biosynthesis; isopentenyl diphosphate biosynthesis via DXP pathway; isopentenyl diphosphate from 1-deoxy-D-xylulose 5-phosphate: step 6/6. Its function is as follows. Catalyzes the conversion of 1-hydroxy-2-methyl-2-(E)-butenyl 4-diphosphate (HMBPP) into a mixture of isopentenyl diphosphate (IPP) and dimethylallyl diphosphate (DMAPP). Acts in the terminal step of the DOXP/MEP pathway for isoprenoid precursor biosynthesis. The chain is 4-hydroxy-3-methylbut-2-enyl diphosphate reductase from Rhizobium johnstonii (strain DSM 114642 / LMG 32736 / 3841) (Rhizobium leguminosarum bv. viciae).